We begin with the raw amino-acid sequence, 698 residues long: MQAHELLQYFRLPELVDIRQYVRTLPTNTLMGFGAFAALTTFWYATRPKALKPPCDLSMQSVEVAGSDGARRSTLLDSDEPLVYFYDDVRTLYDVFQRGIQVSNNGPCLGSRKPDQPYEWLSYKQVEDLSECIGSALLQKGFQASPDQFIGIFAQNRPEWVIIEQACFAYSMVVVPLYDTLGADAITYIVNKAELSVIFADKPEKARILLESVENKLTPGLKIIVVMDSYGSELVEQGKKCGVEVISLKAMEGLGRANRRKPKPPEPDDLAVICFTSGTTGNPKGAMITHKNVVSDCSAFVKATEKALVLNASDIHISFLPLAHMYEQLLQCVMLCHGAKIGFFQGDIRLLMDDLKALQPTIFPVVPRLLNRMFDRIFAQANTTVKRWLLDFASKRKEAELRSGIIRNNSVWDKLIFHKIQSSLGGKVRLMVTGAAPVSATVLTFLRAALGCQFYEGYGQTECTAGCSLSVPGDWTAGHVGAPMPCNFIKLVDVEEMNYMAAMGEGEVCVKGPNVFKGYLKDPAKTAEALDKDGWLHTGDIGKWLPNGTLKIIDRKKHIFKLAQGEYIAPEKIENIYVRSEPVAQVFVHGESLQAFLIAIVVPDAESLASWARKRGFEGSFEELCRNKDVKKAILEDMVRIGKDSGLKSFEQVRGIALHPELFSVDNGLLTPTMKAKRPELRNYFRSQIDELYSTIKV.

An N-acetylmethionine modification is found at Met1. Position 9 is a 3'-nitrotyrosine (Tyr9). Residue Tyr84 is modified to Phosphotyrosine. Ser135 carries O-linked (GlcNAc) serine glycosylation. N6-acetyllysine occurs at positions 356 and 386. Residue Ser620 is modified to Phosphoserine. An N6-acetyllysine modification is found at Lys632.

This sequence belongs to the ATP-dependent AMP-binding enzyme family. Requires Mg(2+) as cofactor.

The protein resides in the microsome membrane. It localises to the mitochondrion outer membrane. Its subcellular location is the peroxisome membrane. The protein localises to the endoplasmic reticulum membrane. The enzyme catalyses a long-chain fatty acid + ATP + CoA = a long-chain fatty acyl-CoA + AMP + diphosphate. It carries out the reaction (5Z,8Z,11Z,14Z)-eicosatetraenoate + ATP + CoA = (5Z,8Z,11Z,14Z)-eicosatetraenoyl-CoA + AMP + diphosphate. The catalysed reaction is 3,7,11,15-tetramethylhexadecanoate + ATP + CoA = phytanoyl-CoA + AMP + diphosphate. It catalyses the reaction hexadecanoate + ATP + CoA = hexadecanoyl-CoA + AMP + diphosphate. The enzyme catalyses (E)-hexadec-2-enoate + ATP + CoA = (2E)-hexadecenoyl-CoA + AMP + diphosphate. It carries out the reaction 2,6,10,14-tetramethylpentadecanoate + ATP + CoA = pristanoyl-CoA + AMP + diphosphate. The catalysed reaction is 14,15-epoxy-(5Z,8Z,11Z)-eicosatrienoate + ATP + CoA = 14,15-epoxy-(5Z,8Z,11Z)-eicosatrienoyl-CoA + AMP + diphosphate. It catalyses the reaction 5-hydroxy-(6E,8Z,11Z,14Z)-eicosatetraenoate + ATP + CoA = 5-hydroxy-(6E,8Z,11Z,14Z)-eicosatetraenoyl-CoA + AMP + diphosphate. The enzyme catalyses 12-hydroxy-(5Z,8Z,10E,14Z)-eicosatetraenoate + ATP + CoA = 12-hydroxy-(5Z,8Z,10E,14Z)-eicosatetraenoyl-CoA + AMP + diphosphate. It carries out the reaction 15-hydroxy-(5Z,8Z,11Z,13E)-eicosatetraenoate + ATP + CoA = 15-hydroxy-(5Z,8Z,11Z,13E)-eicosatetraenoyl-CoA + AMP + diphosphate. The catalysed reaction is (9Z)-octadecenoate + ATP + CoA = (9Z)-octadecenoyl-CoA + AMP + diphosphate. Its activity is regulated as follows. Inhibited at high temperature and by arachidonate. Its function is as follows. Catalyzes the conversion of long-chain fatty acids to their active form acyl-CoAs for both synthesis of cellular lipids, and degradation via beta-oxidation. Preferentially uses palmitoleate, oleate and linoleate. Preferentially activates arachidonate than epoxyeicosatrienoic acids (EETs) or hydroxyeicosatrienoic acids (HETEs). The polypeptide is Long-chain-fatty-acid--CoA ligase 1 (Cavia porcellus (Guinea pig)).